Here is a 200-residue protein sequence, read N- to C-terminus: Mediator of RNA polymerase II transcription subunit 22 (200 aa).

A coiled-coil region spans residues 93–122 (SVNEAIDQRNQQLRALQEECDRKLITLRDE). The tract at residues 169-200 (PLLASPETGAGPLQSAAPVHSHGGGPGPTEHT) is disordered. Residues 190 to 200 (HGGGPGPTEHT) are compositionally biased toward gly residues.

It belongs to the Mediator complex subunit 22 family. As to quaternary structure, component of the Mediator complex, which is composed of MED1, MED4, MED6, MED7, MED8, MED9, MED10, MED11, MED12, MED13, MED13L, MED14, MED15, MED16, MED17, MED18, MED19, MED20, MED21, MED22, MED23, MED24, MED25, MED26, MED27, MED29, MED30, MED31, CCNC, CDK8 and CDC2L6/CDK11. The MED12, MED13, CCNC and CDK8 subunits form a distinct module termed the CDK8 module. Mediator containing the CDK8 module is less active than Mediator lacking this module in supporting transcriptional activation. Individual preparations of the Mediator complex lacking one or more distinct subunits have been variously termed ARC, CRSP, DRIP, PC2, SMCC and TRAP.

It is found in the nucleus. Component of the Mediator complex, a coactivator involved in the regulated transcription of nearly all RNA polymerase II-dependent genes. Mediator functions as a bridge to convey information from gene-specific regulatory proteins to the basal RNA polymerase II transcription machinery. Mediator is recruited to promoters by direct interactions with regulatory proteins and serves as a scaffold for the assembly of a functional preinitiation complex with RNA polymerase II and the general transcription factors. The sequence is that of Mediator of RNA polymerase II transcription subunit 22 (Med22) from Mus musculus (Mouse).